The primary structure comprises 78 residues: uncharacterized protein (78 aa).

Helical transmembrane passes span 20–40 and 57–77; these read SVYF…WLVV and LLMD…ILIA.

It localises to the cell membrane. This is an uncharacterized protein from Escherichia coli (strain K12).